We begin with the raw amino-acid sequence, 393 residues long: S-adenosylmethionine synthase (393 aa).

H16 contacts ATP. D18 is a binding site for Mg(2+). Residue E44 coordinates K(+). Residues E57 and Q100 each contribute to the L-methionine site. The interval 100–110 is flexible loop; sequence QSPDIVMGVDG. ATP is bound by residues 165–167, 231–232, D240, 246–247, and K267; these read DAK, RF, and RK. D240 is a binding site for L-methionine. K271 lines the L-methionine pocket.

The protein belongs to the AdoMet synthase family. In terms of assembly, homotetramer; dimer of dimers. Mg(2+) serves as cofactor. It depends on K(+) as a cofactor.

It localises to the cytoplasm. It catalyses the reaction L-methionine + ATP + H2O = S-adenosyl-L-methionine + phosphate + diphosphate. Its pathway is amino-acid biosynthesis; S-adenosyl-L-methionine biosynthesis; S-adenosyl-L-methionine from L-methionine: step 1/1. In terms of biological role, catalyzes the formation of S-adenosylmethionine (AdoMet) from methionine and ATP. The overall synthetic reaction is composed of two sequential steps, AdoMet formation and the subsequent tripolyphosphate hydrolysis which occurs prior to release of AdoMet from the enzyme. This Coxiella burnetii (strain CbuG_Q212) (Coxiella burnetii (strain Q212)) protein is S-adenosylmethionine synthase.